The following is a 139-amino-acid chain: Hydrogenase maturation factor HypA (139 aa).

Residues Met1 and His2 each coordinate Ni(2+). Zn(2+) is bound by residues Cys73 and Cys76. His98 is a Ni(2+) binding site. Zn(2+) is bound by residues Cys110 and Cys113.

Belongs to the HypA/HybF family. As to quaternary structure, monomer and homodimer. Could also form hexamers. Forms a complex with HypB.

Involved in the maturation of [NiFe] hydrogenases. Required for nickel insertion into the metal center of the hydrogenase. The protein is Hydrogenase maturation factor HypA of Thermococcus kodakarensis (strain ATCC BAA-918 / JCM 12380 / KOD1) (Pyrococcus kodakaraensis (strain KOD1)).